Here is a 235-residue protein sequence, read N- to C-terminus: Large ribosomal subunit protein uL1 (235 aa).

The protein belongs to the universal ribosomal protein uL1 family. As to quaternary structure, part of the 50S ribosomal subunit.

Binds directly to 23S rRNA. The L1 stalk is quite mobile in the ribosome, and is involved in E site tRNA release. In terms of biological role, protein L1 is also a translational repressor protein, it controls the translation of the L11 operon by binding to its mRNA. The protein is Large ribosomal subunit protein uL1 of Prochlorococcus marinus (strain MIT 9301).